The primary structure comprises 213 residues: Kynurenine formamidase (213 aa).

Position 18 (W18) interacts with substrate. Positions 48, 52, and 54 each coordinate Zn(2+). Residue H58 is the Proton donor/acceptor of the active site. The Zn(2+) site is built by H160 and E172.

It belongs to the Cyclase 1 superfamily. KynB family. In terms of assembly, homodimer. Zn(2+) serves as cofactor.

The enzyme catalyses N-formyl-L-kynurenine + H2O = L-kynurenine + formate + H(+). The protein operates within amino-acid degradation; L-tryptophan degradation via kynurenine pathway; L-kynurenine from L-tryptophan: step 2/2. Functionally, catalyzes the hydrolysis of N-formyl-L-kynurenine to L-kynurenine, the second step in the kynurenine pathway of tryptophan degradation. This chain is Kynurenine formamidase, found in Burkholderia pseudomallei (strain 668).